We begin with the raw amino-acid sequence, 299 residues long: 4-hydroxybenzoate octaprenyltransferase (299 aa).

The next 8 helical transmembrane spans lie at 33–53 (VGFL…ADGV), 56–76 (WWTL…GCVI), 107–127 (LLMF…MNQL), 151–171 (LPQV…FAAI), 180–200 (WLLY…YAMV), 213–233 (IAIL…TLML), 247–267 (HTYW…FIIA), and 278–298 (AFMH…LATT).

Belongs to the UbiA prenyltransferase family. The cofactor is Mg(2+).

The protein resides in the cell inner membrane. It catalyses the reaction all-trans-octaprenyl diphosphate + 4-hydroxybenzoate = 4-hydroxy-3-(all-trans-octaprenyl)benzoate + diphosphate. It functions in the pathway cofactor biosynthesis; ubiquinone biosynthesis. Its function is as follows. Catalyzes the prenylation of para-hydroxybenzoate (PHB) with an all-trans polyprenyl group. Mediates the second step in the final reaction sequence of ubiquinone-8 (UQ-8) biosynthesis, which is the condensation of the polyisoprenoid side chain with PHB, generating the first membrane-bound Q intermediate 3-octaprenyl-4-hydroxybenzoate. The protein is 4-hydroxybenzoate octaprenyltransferase of Xylella fastidiosa (strain M12).